A 193-amino-acid chain; its full sequence is FMN-dependent NADH:quinone oxidoreductase (193 aa).

Residues serine 9, 15–17 (SSS), and 137–140 (TSGG) each bind FMN.

Belongs to the azoreductase type 1 family. Homodimer. FMN is required as a cofactor.

The enzyme catalyses 2 a quinone + NADH + H(+) = 2 a 1,4-benzosemiquinone + NAD(+). It catalyses the reaction N,N-dimethyl-1,4-phenylenediamine + anthranilate + 2 NAD(+) = 2-(4-dimethylaminophenyl)diazenylbenzoate + 2 NADH + 2 H(+). In terms of biological role, quinone reductase that provides resistance to thiol-specific stress caused by electrophilic quinones. Its function is as follows. Also exhibits azoreductase activity. Catalyzes the reductive cleavage of the azo bond in aromatic azo compounds to the corresponding amines. The chain is FMN-dependent NADH:quinone oxidoreductase from Pelagibacter ubique (strain HTCC1062).